We begin with the raw amino-acid sequence, 339 residues long: Adenylosuccinate synthetase (339 aa).

Residues Gly12–Ser18 and Gly42–Ser44 contribute to the GTP site. Asp13 (proton acceptor) is an active-site residue. Asp13 and Gly42 together coordinate Mg(2+). IMP is bound by residues Asp13–Lys16, Asn40–His43, Thr127, Arg141, Gln179, Thr194, and Arg256. His43 serves as the catalytic Proton donor. Thr252–Arg258 is a substrate binding site. GTP is bound by residues Arg258, Met284–Asp286, and Lys324–Gly326.

The protein belongs to the adenylosuccinate synthetase family. As to quaternary structure, homodimer. Mg(2+) serves as cofactor.

Its subcellular location is the cytoplasm. The catalysed reaction is IMP + L-aspartate + GTP = N(6)-(1,2-dicarboxyethyl)-AMP + GDP + phosphate + 2 H(+). It functions in the pathway purine metabolism; AMP biosynthesis via de novo pathway; AMP from IMP: step 1/2. Plays an important role in the de novo pathway of purine nucleotide biosynthesis. Catalyzes the first committed step in the biosynthesis of AMP from IMP. In Thermococcus onnurineus (strain NA1), this protein is Adenylosuccinate synthetase.